Reading from the N-terminus, the 396-residue chain is L-lactate dehydrogenase (396 aa).

The FMN hydroxy acid dehydrogenase domain maps to 1-380; that stretch reads MIISAASDYR…SGDSLVQELG (380 aa). Tyr24 provides a ligand contact to substrate. Ser106 and Gln127 together coordinate FMN. Tyr129 lines the substrate pocket. Thr155 serves as a coordination point for FMN. Position 164 (Arg164) interacts with substrate. An FMN-binding site is contributed by Lys251. Catalysis depends on His275, which acts as the Proton acceptor. Arg278 serves as a coordination point for substrate. Position 306–330 (306–330) interacts with FMN; that stretch reads DSGIRNGLDVVRMIALGADTVLLGR.

It belongs to the FMN-dependent alpha-hydroxy acid dehydrogenase family. FMN is required as a cofactor.

The protein resides in the cell inner membrane. It carries out the reaction (S)-lactate + A = pyruvate + AH2. Its function is as follows. Catalyzes the conversion of L-lactate to pyruvate. Is coupled to the respiratory chain. This chain is L-lactate dehydrogenase, found in Salmonella paratyphi A (strain ATCC 9150 / SARB42).